We begin with the raw amino-acid sequence, 143 residues long: Nucleoside diphosphate kinase (143 aa).

ATP contacts are provided by lysine 11, phenylalanine 59, arginine 87, threonine 93, arginine 104, and asparagine 114. The Pros-phosphohistidine intermediate role is filled by histidine 117.

This sequence belongs to the NDK family. In terms of assembly, homotetramer. Mg(2+) serves as cofactor.

It localises to the cytoplasm. It carries out the reaction a 2'-deoxyribonucleoside 5'-diphosphate + ATP = a 2'-deoxyribonucleoside 5'-triphosphate + ADP. It catalyses the reaction a ribonucleoside 5'-diphosphate + ATP = a ribonucleoside 5'-triphosphate + ADP. Its function is as follows. Major role in the synthesis of nucleoside triphosphates other than ATP. The ATP gamma phosphate is transferred to the NDP beta phosphate via a ping-pong mechanism, using a phosphorylated active-site intermediate. The sequence is that of Nucleoside diphosphate kinase from Salmonella agona (strain SL483).